Consider the following 144-residue polypeptide: RNA-binding protein 1 (144 aa).

The 74-residue stretch at 11–84 folds into the RRM domain; the sequence is CKVYVGNLGS…TRIRVEMSSG (74 aa). Residues 78–115 are disordered; sequence RVEMSSGRSRDRRRGEGGSSGRSGSGRYRITPSARTTS.

This sequence belongs to the splicing factor SR family. As to quaternary structure, interacts with x16 (via Arg/Ser-rich region). In terms of processing, extensively phosphorylated on serine residues in the RS domain. The tandem heptapeptide repeats in the C-terminal domain (CTD) can be highly phosphorylated. The phosphorylation activates Pol II. Phosphorylation occurs at residues 'Ser-2', 'Ser-5' and 'Ser-7' of the heptapeptide repeat and is mediated by P-TEFb. Dephosphorylated by the INTAC complex when transcripts are unfavorably configured for transcriptional elongation, leading to premature transcription termination: dephosphorylation is mediated by the mts/PP2A component of the INTAC complex. As to expression, ubiquitous.

Its subcellular location is the nucleus. Its function is as follows. Contributes to the activation of female-specific DSX splicing in vivo by recognizing the RBP1 target sequences within the purine-rich polypyrimidine tract of the female-specific 3' splice site. In Drosophila melanogaster (Fruit fly), this protein is RNA-binding protein 1 (Rbp1).